A 397-amino-acid chain; its full sequence is Acetate kinase (397 aa).

Position 7 (Asn7) interacts with Mg(2+). Residue Lys14 participates in ATP binding. Arg90 serves as a coordination point for substrate. Asp147 (proton donor/acceptor) is an active-site residue. Residues 207-211, 282-284, and 330-334 each bind ATP; these read HLGNG, DFR, and GLGEN. Glu383 is a Mg(2+) binding site.

It belongs to the acetokinase family. As to quaternary structure, homodimer. The cofactor is Mg(2+). Requires Mn(2+) as cofactor.

The protein localises to the cytoplasm. The enzyme catalyses acetate + ATP = acetyl phosphate + ADP. It functions in the pathway metabolic intermediate biosynthesis; acetyl-CoA biosynthesis; acetyl-CoA from acetate: step 1/2. Functionally, catalyzes the formation of acetyl phosphate from acetate and ATP. Can also catalyze the reverse reaction. This is Acetate kinase from Clostridium botulinum (strain Loch Maree / Type A3).